A 219-amino-acid polypeptide reads, in one-letter code: Probable GTP-binding protein EngB (219 aa).

The 184-residue stretch at Val-24–Pro-207 folds into the EngB-type G domain. GTP contacts are provided by residues Gly-32–Ser-39, Gly-59–His-63, Asp-81–Gly-84, Thr-148–Asp-151, and Phe-186–Ala-188. Mg(2+) is bound by residues Ser-39 and Thr-61.

Belongs to the TRAFAC class TrmE-Era-EngA-EngB-Septin-like GTPase superfamily. EngB GTPase family. Requires Mg(2+) as cofactor.

In terms of biological role, necessary for normal cell division and for the maintenance of normal septation. The chain is Probable GTP-binding protein EngB from Burkholderia cenocepacia (strain HI2424).